The primary structure comprises 142 residues: HTH-type transcriptional regulator MntR (142 aa).

The 63-residue stretch at Met1 to Thr63 folds into the HTH dtxR-type domain. Mn(2+)-binding residues include Asp8, Glu11, His77, Glu99, Glu102, and His103.

It belongs to the DtxR/MntR family. As to quaternary structure, homodimer.

It is found in the cytoplasm. Its activity is regulated as follows. DNA binding is strongly activated by Mn(2+). Functionally, central regulator of manganese homeostasis. This is HTH-type transcriptional regulator MntR from Bacillus cytotoxicus (strain DSM 22905 / CIP 110041 / 391-98 / NVH 391-98).